Reading from the N-terminus, the 264-residue chain is COP9 signalosome complex subunit 7b (264 aa).

A2 carries the N-acetylalanine modification. The PCI domain occupies 2–159; it reads AGEQKPSSNL…QLLEVDFCIG (158 aa). A coiled-coil region spans residues 188-237; the sequence is IEQQVLRANQYKENHNRTQQQVEAEVTNIKKTLKATASSSAQEMEQQLAE. Residues 223–232 show a composition bias toward polar residues; it reads TASSSAQEME. The segment at 223–264 is disordered; that stretch reads TASSSAQEMEQQLAERECPPHAEQRQPTKKMSKVKGLVSSRH. Positions 235–248 are enriched in basic and acidic residues; sequence LAERECPPHAEQRQ. S261 bears the Phosphothreonine mark. R263 is subject to Phosphoserine.

It belongs to the CSN7/EIF3M family. CSN7 subfamily. Component of the CSN complex, composed of COPS1/GPS1, COPS2, COPS3, COPS4, COPS5, COPS6, COPS7 (COPS7A or COPS7B), COPS8 and COPS9 isoform 1. In the complex, it probably interacts directly with COPS1, COPS2, COPS4, COPS5, COPS6 and COPS8. Interacts with EIF3S6. In terms of assembly, (Microbial infection) Interacts with vaccinia virus protein C9L.

The protein localises to the cytoplasm. The protein resides in the nucleus. Functionally, component of the COP9 signalosome complex (CSN), a complex involved in various cellular and developmental processes. The CSN complex is an essential regulator of the ubiquitin (Ubl) conjugation pathway by mediating the deneddylation of the cullin subunits of SCF-type E3 ligase complexes, leading to decrease the Ubl ligase activity of SCF-type complexes such as SCF, CSA or DDB2. The complex is also involved in phosphorylation of p53/TP53, JUN, I-kappa-B-alpha/NFKBIA, ITPK1 and IRF8/ICSBP, possibly via its association with CK2 and PKD kinases. CSN-dependent phosphorylation of TP53 and JUN promotes and protects degradation by the Ubl system, respectively. The sequence is that of COP9 signalosome complex subunit 7b (COPS7B) from Homo sapiens (Human).